The sequence spans 341 residues: Glycerol-3-phosphate dehydrogenase [NAD(P)+] (341 aa).

Residues Ser-15, Trp-16, Arg-36, and Lys-110 each contribute to the NADPH site. Residues Lys-110, Gly-139, and Ser-141 each contribute to the sn-glycerol 3-phosphate site. Ala-143 contacts NADPH. Sn-glycerol 3-phosphate-binding residues include Lys-194, Asp-247, Ser-257, Arg-258, and Asn-259. Lys-194 acts as the Proton acceptor in catalysis. Residue Arg-258 participates in NADPH binding. Positions 282 and 284 each coordinate NADPH.

The protein belongs to the NAD-dependent glycerol-3-phosphate dehydrogenase family.

Its subcellular location is the cytoplasm. The catalysed reaction is sn-glycerol 3-phosphate + NAD(+) = dihydroxyacetone phosphate + NADH + H(+). The enzyme catalyses sn-glycerol 3-phosphate + NADP(+) = dihydroxyacetone phosphate + NADPH + H(+). It participates in membrane lipid metabolism; glycerophospholipid metabolism. Catalyzes the reduction of the glycolytic intermediate dihydroxyacetone phosphate (DHAP) to sn-glycerol 3-phosphate (G3P), the key precursor for phospholipid synthesis. This is Glycerol-3-phosphate dehydrogenase [NAD(P)+] from Xanthomonas campestris pv. campestris (strain 8004).